Reading from the N-terminus, the 215-residue chain is Large ribosomal subunit protein uL4 (215 aa).

The segment at 46 to 72 (TAKSKNRAEVSGGGRKPWAQKGGGRAR) is disordered. Positions 56-71 (SGGGRKPWAQKGGGRA) are enriched in gly residues.

This sequence belongs to the universal ribosomal protein uL4 family. As to quaternary structure, part of the 50S ribosomal subunit.

In terms of biological role, one of the primary rRNA binding proteins, this protein initially binds near the 5'-end of the 23S rRNA. It is important during the early stages of 50S assembly. It makes multiple contacts with different domains of the 23S rRNA in the assembled 50S subunit and ribosome. Its function is as follows. Forms part of the polypeptide exit tunnel. The sequence is that of Large ribosomal subunit protein uL4 from Helicobacter pylori (strain J99 / ATCC 700824) (Campylobacter pylori J99).